We begin with the raw amino-acid sequence, 89 residues long: Large ribosomal subunit protein bL27 (89 aa).

The disordered stretch occupies residues 1–24 (MAHKKAGGSSRNGRDSAGRRLGVK).

The protein belongs to the bacterial ribosomal protein bL27 family.

This is Large ribosomal subunit protein bL27 from Maricaulis maris (strain MCS10) (Caulobacter maris).